Reading from the N-terminus, the 536-residue chain is DNA damage-binding protein CMR1 (536 aa).

Basic and acidic residues predominate over residues 36–45 (REAGVDDTHR). Positions 36-72 (REAGVDDTHRTVVKKKKSPSVSRGRSASPKVAPVATR) are disordered. WD repeat units follow at residues 195–236 (LVYE…LSEN), 251–291 (FFTK…SNDI), 346–386 (LSDK…KKPE), 403–442 (DSRL…LPDD), 456–495 (GRWT…LAHL), and 496–535 (PTAT…KEEE).

Belongs to the WD repeat DDB2/WDR76 family.

Functionally, DNA-binding protein that binds to both single- and double-stranded DNA. Binds preferentially to UV-damaged DNA. May be involved in DNA-metabolic processes. The chain is DNA damage-binding protein CMR1 from Vanderwaltozyma polyspora (strain ATCC 22028 / DSM 70294 / BCRC 21397 / CBS 2163 / NBRC 10782 / NRRL Y-8283 / UCD 57-17) (Kluyveromyces polysporus).